A 913-amino-acid chain; its full sequence is Sterol uptake control protein 2 (913 aa).

Residues 50–80 constitute a DNA-binding region (zn(2)-C6 fungal-type); that stretch reads GCDNCKRRRVKCDEGKPACRKCTNMKLECQY. 2 disordered regions span residues 103 to 173 and 216 to 258; these read GSVE…SMGL and GNMG…LAGS. Residue threonine 122 is modified to Phosphothreonine. Basic and acidic residues predominate over residues 150–164; the sequence is SESEEKSSAPIEDKN. Low complexity predominate over residues 222-241; that stretch reads QLQQQQQVQQQSQPQTQAQQ. A coiled-coil region spans residues 303-346; that stretch reads QQHQQVQLQQYQQLRQEQHQQVQQQQQEQLQQYQQHFLQQQQQV. 2 disordered regions span residues 347–385 and 453–489; these read LLQQEQQPNDEEGGVQEENSKKVKEGPLQSQTSETTLNS and MQEHHERAAASVKENDGQLSDTKSPAPSNNAQGGSAS. Positions 374-385 are enriched in polar residues; that stretch reads LQSQTSETTLNS. Residues 440–472 adopt a coiled-coil conformation; the sequence is ATKASNAEEALANMQEHHERAAASVKENDGQLS. Residues 454 to 468 are compositionally biased toward basic and acidic residues; the sequence is QEHHERAAASVKEND. A compositionally biased stretch (polar residues) spans 469–487; it reads GQLSDTKSPAPSNNAQGGS. Residue serine 519 is modified to Phosphoserine. The span at 552 to 562 shows a compositional bias: polar residues; that stretch reads EPTISLQTSQT. The disordered stretch occupies residues 552 to 571; sequence EPTISLQTSQTENEDDASRQ.

It localises to the nucleus. Functionally, transcription factor that is involved in activation of anaerobic genes such as DAN/TIR cell wall mannoprotein genes and YML083c. Appears to bind to anaerobic response elements (AR1) with the consensus sequence 5'-TCGTTYAG-3' present in the promoter regions of DAN/TIR genes. Involved in sterol uptake and regulation of the sterol biosynthesis. Binds to sterol regulatory elements (SRE) with the consensus sequence 5'-TCGTATA-3' present in ERG2 and ERG3 promoters. May be involved in down-regulation of CWP2 during anaerobic adaptation. The polypeptide is Sterol uptake control protein 2 (UPC2) (Saccharomyces cerevisiae (strain ATCC 204508 / S288c) (Baker's yeast)).